Consider the following 522-residue polypeptide: Ankyrin repeat and death domain-containing protein 1A (522 aa).

ANK repeat units lie at residues 14 to 43 (PLER…NTRA), 47 to 76 (VGRV…AVDE), 90 to 119 (FGMN…KIHC), 123 to 152 (DGLT…DVAL), 158 to 187 (LGRT…DHNV), 191 to 220 (EGNT…DLEE), 224 to 253 (EGLT…TVNA), 257 to 286 (KNLS…CANV), 290 to 319 (QGAS…DVNA), 323 to 352 (RQQT…DLNL), and 356 to 385 (QGKT…FYRW). Residues 413–501 (SVLWRLASRY…DLAGWSTMAR (89 aa)) form the Death domain.

The chain is Ankyrin repeat and death domain-containing protein 1A (ANKDD1A) from Homo sapiens (Human).